A 613-amino-acid polypeptide reads, in one-letter code: Dihydroxy-acid dehydratase (613 aa).

Asp81 lines the Mg(2+) pocket. Residue Cys122 participates in [2Fe-2S] cluster binding. Mg(2+)-binding residues include Asp123 and Lys124. An N6-carboxylysine modification is found at Lys124. Cys195 is a [2Fe-2S] cluster binding site. Glu491 provides a ligand contact to Mg(2+). The active-site Proton acceptor is the Ser517.

The protein belongs to the IlvD/Edd family. As to quaternary structure, homodimer. Requires [2Fe-2S] cluster as cofactor. Mg(2+) serves as cofactor.

It carries out the reaction (2R)-2,3-dihydroxy-3-methylbutanoate = 3-methyl-2-oxobutanoate + H2O. The enzyme catalyses (2R,3R)-2,3-dihydroxy-3-methylpentanoate = (S)-3-methyl-2-oxopentanoate + H2O. The protein operates within amino-acid biosynthesis; L-isoleucine biosynthesis; L-isoleucine from 2-oxobutanoate: step 3/4. It participates in amino-acid biosynthesis; L-valine biosynthesis; L-valine from pyruvate: step 3/4. Functionally, functions in the biosynthesis of branched-chain amino acids. Catalyzes the dehydration of (2R,3R)-2,3-dihydroxy-3-methylpentanoate (2,3-dihydroxy-3-methylvalerate) into 2-oxo-3-methylpentanoate (2-oxo-3-methylvalerate) and of (2R)-2,3-dihydroxy-3-methylbutanoate (2,3-dihydroxyisovalerate) into 2-oxo-3-methylbutanoate (2-oxoisovalerate), the penultimate precursor to L-isoleucine and L-valine, respectively. This is Dihydroxy-acid dehydratase from Buchnera aphidicola subsp. Schlechtendalia chinensis.